The sequence spans 403 residues: 4,4'-dithiodibutanoate disulfide reductase (403 aa).

Glutamine 103 contributes to the FMN binding site. Tyrosine 173 acts as the Proton donor in catalysis. FMN is bound at residue 348–349 (AR).

This sequence belongs to the NADH:flavin oxidoreductase/NADH oxidase family. It depends on FMN as a cofactor.

The enzyme catalyses 2 4-sulfanylbutanoate + NAD(+) = 4,4'-disulfanyldibutanoate + NADH + H(+). With respect to regulation, inactivated by cobalt, nickel and zinc ions. Its function is as follows. Involved in the degradation of the organic disulfide 4,4'-dithiodibutyric acid (DTDB). Catalyzes the initial cleavage of DTDB into 2 molecules of 4-mercaptobutyric acid (4MB). Low activities are observed with other disulfide compounds, such as 3,3'-dithiodipropionic acid DTDP, 3,3'-thiodipropionic acid TDP and DTNB. This chain is 4,4'-dithiodibutanoate disulfide reductase, found in Rhodococcus erythropolis (Arthrobacter picolinophilus).